Reading from the N-terminus, the 334-residue chain is MKTLGEFIVEKQHDFSHATGELTALLSAIKLGAKIIHRDINKAGLVDILGASGISNVQGEVQMKLDLYANEKLKAALKARGEVAGIASEEEDEIVIFEGDKAENAKYVVLMDPLDGSSNIDVNVSVGTIFSIYRRITPLGTSVTEADFLQPGSQQVAAGYIVYGSSTMLVYTTGHGVHAFTYDPSLGVFCLSHEKVCFPEKGNMYSINEGNYIKFPSGVKKYIKYCQEQDEETQRPYTSRYIGSLVADFHRNLLKGGIYLYPSTASYPKGKLRLLYECNPMAFLAEQAGGKASDGKHRILDITPEKLHQRSPFFVGTESMVDDVERFIREFPDA.

Residues Glu89, Asp112, Leu114, and Asp115 each coordinate Mg(2+). Substrate contacts are provided by residues 115 to 118 (DGSS), Asn208, Tyr241, 259 to 261 (YLY), and Lys271. Residue Glu277 coordinates Mg(2+).

It belongs to the FBPase class 1 family. As to quaternary structure, homotetramer. Mg(2+) is required as a cofactor.

It is found in the cytoplasm. The catalysed reaction is beta-D-fructose 1,6-bisphosphate + H2O = beta-D-fructose 6-phosphate + phosphate. It participates in carbohydrate biosynthesis; gluconeogenesis. This is Fructose-1,6-bisphosphatase class 1 from Pectobacterium atrosepticum (strain SCRI 1043 / ATCC BAA-672) (Erwinia carotovora subsp. atroseptica).